Here is a 494-residue protein sequence, read N- to C-terminus: Bifunctional pantoate ligase/cytidylate kinase (494 aa).

A pantoate--beta-alanine ligase region spans residues 1–258; it reads MHFVPTMGGL…CGSTRLIDHA (258 aa). 7–14 is an ATP binding site; the sequence is MGGLHHGH. Histidine 14 (proton donor) is an active-site residue. (R)-pantoate is bound at residue glutamine 41. Residue glutamine 41 participates in beta-alanine binding. 130–133 is a binding site for ATP; that stretch reads GEKD. Position 136 (glutamine 136) interacts with (R)-pantoate. ATP is bound by residues valine 159 and 167–170; that span reads SSSR. Residues 259–494 form a cytidylate kinase region; it reads FLMTRSPLVA…VGEEVWPTPV (236 aa).

The protein in the N-terminal section; belongs to the pantothenate synthetase family. It in the C-terminal section; belongs to the cytidylate kinase family. Type 1 subfamily.

The protein localises to the cytoplasm. The catalysed reaction is (R)-pantoate + beta-alanine + ATP = (R)-pantothenate + AMP + diphosphate + H(+). The enzyme catalyses CMP + ATP = CDP + ADP. It catalyses the reaction dCMP + ATP = dCDP + ADP. It functions in the pathway cofactor biosynthesis; (R)-pantothenate biosynthesis; (R)-pantothenate from (R)-pantoate and beta-alanine: step 1/1. In terms of biological role, catalyzes the condensation of pantoate with beta-alanine in an ATP-dependent reaction via a pantoyl-adenylate intermediate. Catalyzes the transfer of a phosphate group from ATP to either CMP or dCMP to form CDP or dCDP and ADP, respectively. This chain is Bifunctional pantoate ligase/cytidylate kinase, found in Synechococcus sp. (strain CC9311).